A 386-amino-acid chain; its full sequence is Putative 8-amino-7-oxononanoate synthase (386 aa).

Arg22 lines the substrate pocket. Gly109–Tyr110 serves as a coordination point for pyridoxal 5'-phosphate. His134 contacts substrate. Pyridoxal 5'-phosphate-binding positions include Ser182, Asp207 to His210, and Thr238 to Lys241. The residue at position 241 (Lys241) is an N6-(pyridoxal phosphate)lysine. Thr356 contacts substrate.

The protein belongs to the class-II pyridoxal-phosphate-dependent aminotransferase family. BioF subfamily. In terms of assembly, homodimer. It depends on pyridoxal 5'-phosphate as a cofactor.

The catalysed reaction is 6-carboxyhexanoyl-[ACP] + L-alanine + H(+) = (8S)-8-amino-7-oxononanoate + holo-[ACP] + CO2. It functions in the pathway cofactor biosynthesis; biotin biosynthesis. Catalyzes the decarboxylative condensation of pimeloyl-[acyl-carrier protein] and L-alanine to produce 8-amino-7-oxononanoate (AON), [acyl-carrier protein], and carbon dioxide. This is Putative 8-amino-7-oxononanoate synthase (bioF) from Trichormus variabilis (strain ATCC 29413 / PCC 7937) (Anabaena variabilis).